Consider the following 256-residue polypeptide: Trans-aconitate 2-methyltransferase (256 aa).

Belongs to the methyltransferase superfamily. Tam family.

It is found in the cytoplasm. It carries out the reaction trans-aconitate + S-adenosyl-L-methionine = (E)-3-(methoxycarbonyl)pent-2-enedioate + S-adenosyl-L-homocysteine. Its function is as follows. Catalyzes the S-adenosylmethionine monomethyl esterification of trans-aconitate. The protein is Trans-aconitate 2-methyltransferase of Rhodopseudomonas palustris (strain BisA53).